A 474-amino-acid chain; its full sequence is MSIQAPPRLLELAGQSLLRDQALSISAMEELPRVLYLPLFMEAFRRRHFQTLTVMVQAWPFTCLPLGSLMKTLHLETLKALLEGLHMLLTQKDRPRRRKLQVLDLRDVDENFWARWPGAWALSCFPETMSKRQTAEDRPRMGEHQPLKVFIDICLKEIPQDECLRYLFQWVYQRRGLVHLCCSKLVNYLTPIKHLRKSLKIIYLNSIQELEIHNMSWPRLIRKLRCYLKEMKTLGKLVFSRCHHSTSDNELEGRLVTKFSSVFLGLEHLQLLKIKLITFFSGHLEQLIRCLQNPLENLELTYGYLLEEDVKCLSQYPSLGYLKHLNLSYVLLFRISLEPLGALLEKIAASLETLILEGCQIHYSQLSAILPGLSRCSQLTTFYFGRNCMSMGALKDLLRHTSGLSKLSLETYPAPEESLNSLVRVNWEIFTPLRAELMCTLREVRQPKRIFIGPTPCPSCGSSLSEELELHLCC.

The LRR 1; degenerate repeat unit spans residues 97-124 (RRKLQVLDLRDVDENFWARWPGAWALSC). The LRR 2; degenerate repeat unit spans residues 179–203 (HLCCSKLVNYLTPIKHLRKSLKIIY). An LRR 3; degenerate repeat occupies 204–230 (LNSIQELEIHNMSWPRLIRKLRCYLKE). Residues 231 to 265 (MKTLGKLVFSRCHHSTSDNELEGRLVTKFSSVFLG) form an LRR 4; degenerate repeat. LRR repeat units lie at residues 266–291 (LEHLQLLKIKLITFFSGHLEQLIRCL), 292–323 (QNPLENLELTYGYLLEEDVKCLSQYPSLGYLK), 324–342 (HLNLSYVLLFRISLEPLGA), 348–375 (AASLETLILEGCQIHYSQLSAILPGLSR), and 376–400 (CSQLTTFYFGRNCMSMGALKDLLRH).

Belongs to the PRAME family.

The polypeptide is PRAME family member 13 (Homo sapiens (Human)).